The primary structure comprises 201 residues: UPF0323 lipoprotein Cj0371 (201 aa).

Positions 1–26 (MKKIKKIIQIGMIGGLAAVAGGALAG) are cleaved as a signal peptide. Cys-27 is lipidated: N-palmitoyl cysteine. Residue Cys-27 is the site of S-diacylglycerol cysteine attachment. Residues 169–201 (NKAGTTSSASSAKKSGFFGGGSKATSSSSSFGS) form a disordered region. Composition is skewed to low complexity over residues 170–184 (KAGT…KKSG) and 191–201 (KATSSSSSFGS).

It belongs to the UPF0323 family.

The protein localises to the cell membrane. The sequence is that of UPF0323 lipoprotein Cj0371 from Campylobacter jejuni subsp. jejuni serotype O:2 (strain ATCC 700819 / NCTC 11168).